The chain runs to 241 residues: Uridylate kinase (241 aa).

ATP is bound at residue K12 to G15. Positions G20–G25 are involved in allosteric activation by GTP. G54 contacts UMP. G55 and R59 together coordinate ATP. Residues D74 and T135–T142 contribute to the UMP site. N163, Y169, and D172 together coordinate ATP.

The protein belongs to the UMP kinase family. Homohexamer.

It is found in the cytoplasm. It catalyses the reaction UMP + ATP = UDP + ADP. It functions in the pathway pyrimidine metabolism; CTP biosynthesis via de novo pathway; UDP from UMP (UMPK route): step 1/1. Allosterically activated by GTP. Inhibited by UTP. Catalyzes the reversible phosphorylation of UMP to UDP. The protein is Uridylate kinase of Lactobacillus delbrueckii subsp. bulgaricus (strain ATCC 11842 / DSM 20081 / BCRC 10696 / JCM 1002 / NBRC 13953 / NCIMB 11778 / NCTC 12712 / WDCM 00102 / Lb 14).